We begin with the raw amino-acid sequence, 1178 residues long: Niemann-Pick type C1-related protein (1178 aa).

The N-linked (GlcNAc...) asparagine glycan is linked to N41. 2 helical membrane passes run P157–L177 and V412–V432. The 157-residue stretch at E414–L570 folds into the SSD domain. N-linked (GlcNAc...) asparagine glycosylation occurs at N433. 4 helical membrane-spanning segments follow: residues G448–V468, P478–L498, A516–L536, and F545–L565. An N-linked (GlcNAc...) asparagine glycan is attached at N621. Residues A789 to L809 traverse the membrane as a helical segment. N-linked (GlcNAc...) asparagine glycosylation is found at N917 and N943. Transmembrane regions (helical) follow at residues F986 to I1006, I1013 to I1033, L1037 to I1057, I1080 to L1100, and M1114 to L1134.

Belongs to the patched family.

The protein localises to the inner membrane complex. The enzyme catalyses cholesterol(in) = cholesterol(out). Functionally, likely facilitates the efflux of cholesterol and gangliosides from membranes. Plays a role in the regulation of lipid homeostasis. The sequence is that of Niemann-Pick type C1-related protein from Toxoplasma gondii (strain ATCC 50611 / Me49).